The sequence spans 347 residues: NADH-ubiquinone oxidoreductase chain 2 (347 aa).

10 helical membrane-spanning segments follow: residues 13-33, 55-75, 96-116, 122-142, 151-171, 178-198, 199-219, 237-257, 277-297, and 326-346; these read VFTGTLITALSSHWFFAWLGL, AAIKYFLTQATASMIFLMAIL, LMIVTALAMKLGMAPFHFWVP, VPLTSGLLLLTWQKLAPISIM, TNILLTLSILSILVGSWGGLN, ILAYSSITHMGWMVAVLPYNP, NITILNLIIYITLTTTTFLIL, LTWLMPLISSTLLSLGGLPPL, IAPTIMAIISLLNLYFYARLI, and LPTLTILTALLLPISPLILSI.

The protein belongs to the complex I subunit 2 family. Core subunit of respiratory chain NADH dehydrogenase (Complex I) which is composed of 45 different subunits. Interacts with TMEM242.

The protein localises to the mitochondrion inner membrane. It carries out the reaction a ubiquinone + NADH + 5 H(+)(in) = a ubiquinol + NAD(+) + 4 H(+)(out). Core subunit of the mitochondrial membrane respiratory chain NADH dehydrogenase (Complex I) which catalyzes electron transfer from NADH through the respiratory chain, using ubiquinone as an electron acceptor. Essential for the catalytic activity and assembly of complex I. In Pongo pygmaeus (Bornean orangutan), this protein is NADH-ubiquinone oxidoreductase chain 2.